The sequence spans 437 residues: Enolase 1 (437 aa).

Lysine 60 participates in a covalent cross-link: Glycyl lysine isopeptide (Lys-Gly) (interchain with G-Cter in ubiquitin). Serine 119 and serine 138 each carry phosphoserine. Histidine 160 and glutamate 169 together coordinate substrate. Serine 188 carries the post-translational modification Phosphoserine. Glutamate 212 serves as the catalytic Proton donor. Residue lysine 243 forms a Glycyl lysine isopeptide (Lys-Gly) (interchain with G-Cter in ubiquitin) linkage. Mg(2+) is bound by residues aspartate 247 and glutamate 296. Glutamate 296 is a binding site for substrate. At threonine 313 the chain carries Phosphothreonine. Aspartate 321 provides a ligand contact to substrate. Residue aspartate 321 participates in Mg(2+) binding. The residue at position 324 (threonine 324) is a Phosphothreonine. Lysine 346 serves as the catalytic Proton acceptor. Lysine 358 participates in a covalent cross-link: Glycyl lysine isopeptide (Lys-Gly) (interchain with G-Cter in ubiquitin). Substrate contacts are provided by residues 373–376 and lysine 397; that span reads SHRS.

The protein belongs to the enolase family. In terms of assembly, homodimer. Mg(2+) is required as a cofactor.

It is found in the cytoplasm. The enzyme catalyses (2R)-2-phosphoglycerate = phosphoenolpyruvate + H2O. It participates in carbohydrate degradation; glycolysis; pyruvate from D-glyceraldehyde 3-phosphate: step 4/5. The chain is Enolase 1 (ENO1) from Saccharomyces cerevisiae (strain ATCC 204508 / S288c) (Baker's yeast).